We begin with the raw amino-acid sequence, 561 residues long: Urocanate hydratase (561 aa).

Residues 52 to 53 (GG), Gln-130, 176 to 178 (GMG), Glu-196, Arg-201, 242 to 243 (NA), 267 to 271 (QTSAH), 277 to 278 (YL), and Tyr-326 each bind NAD(+). Cys-414 is a catalytic residue. Gly-496 provides a ligand contact to NAD(+).

Belongs to the urocanase family. Requires NAD(+) as cofactor.

It is found in the cytoplasm. It catalyses the reaction 4-imidazolone-5-propanoate = trans-urocanate + H2O. Its pathway is amino-acid degradation; L-histidine degradation into L-glutamate; N-formimidoyl-L-glutamate from L-histidine: step 2/3. Its function is as follows. Catalyzes the conversion of urocanate to 4-imidazolone-5-propionate. This chain is Urocanate hydratase, found in Rhizobium rhizogenes (strain K84 / ATCC BAA-868) (Agrobacterium radiobacter).